The sequence spans 65 residues: MSKLKGPDGRIPDRLPDGRPAVAWERRWTEGTLPLWLVATAGGIAVIFVLGIFFYGSYQGVGAGG.

A helical transmembrane segment spans residues Leu-35–Tyr-55.

This sequence belongs to the PsbJ family. PSII is composed of 1 copy each of membrane proteins PsbA, PsbB, PsbC, PsbD, PsbE, PsbF, PsbH, PsbI, PsbJ, PsbK, PsbL, PsbM, PsbT, PsbX, PsbY, Psb30/Ycf12, peripheral proteins PsbO, CyanoQ (PsbQ), PsbU, PsbV and a large number of cofactors. It forms dimeric complexes.

The protein localises to the cellular thylakoid membrane. Functionally, one of the components of the core complex of photosystem II (PSII). PSII is a light-driven water:plastoquinone oxidoreductase that uses light energy to abstract electrons from H(2)O, generating O(2) and a proton gradient subsequently used for ATP formation. It consists of a core antenna complex that captures photons, and an electron transfer chain that converts photonic excitation into a charge separation. The chain is Photosystem II reaction center protein J from Prochlorococcus marinus (strain MIT 9312).